Here is a 543-residue protein sequence, read N- to C-terminus: Limonene hydroxylase (543 aa).

Positions 232 to 464 (VVTYNPSFEK…LRNVIERAFL (233 aa)) constitute a Sigma-54 factor interaction domain. Residues 260 to 267 (GETGSGKE) and 324 to 333 (ADGGTLFLDE) each bind ATP.

The enzyme catalyses (4S)-limonene + reduced [NADPH--hemoprotein reductase] + O2 = (1S,5R)-carveol + oxidized [NADPH--hemoprotein reductase] + H2O + H(+). The catalysed reaction is (4S)-limonene + reduced [NADPH--hemoprotein reductase] + O2 = (4S)-perillyl alcohol + oxidized [NADPH--hemoprotein reductase] + H2O + H(+). It catalyses the reaction perillyl alcohol + NAD(+) = perillyl aldehyde + NADH + H(+). It carries out the reaction (1S,5R)-carveol + NADP(+) = (R)-carvone + NADPH + H(+). Its function is as follows. Involved in limonene hydroxylation to a mixture of carveol and perillyl alcohol as well as in dehydrogenation of these products to carvone and perillyl aldehyde. Aromatic alcohols containing an isopropyl or isopropenyl group at ring position 4 also served as substrates for the dehydrogenase activity. This chain is Limonene hydroxylase, found in Geobacillus stearothermophilus (Bacillus stearothermophilus).